Here is a 353-residue protein sequence, read N- to C-terminus: Palmitoyltransferase SWF1 (353 aa).

A topological domain (lumenal) is located at residue methionine 1. A helical membrane pass occupies residues 2–22; the sequence is LFTLIVCLTIISSLATFLLLF. The Cytoplasmic portion of the chain corresponds to 23 to 61; sequence GDSPSFRNTPIQKLRNSLLSISRDIFQFYHWLDEKLNGQ. Residues 62 to 82 form a helical membrane-spanning segment; it reads LLKILNWLVPVGYVMVVTVCF. Topologically, residues 83–100 are lumenal; that stretch reads QQFLTHTLPMLSSPGLFR. Residues 101 to 121 form a helical membrane-spanning segment; it reads LFTIYFSMVLIYASTILAAFS. Topologically, residues 122 to 190 are cytoplasmic; it reads DPGRITTINL…NNCVGYYNYK (69 aa). The DHHC domain maps to 147–197; that stretch reads KTCSTCHIAKPARSKHCSVCNQCFLLYDHHCVWINNCVGYYNYKWFMLFLI. The active-site S-palmitoyl cysteine intermediate is cysteine 177. The chain crosses the membrane as a helical span at residues 191–211; it reads WFMLFLISNINMLGYGGWLCY. The Lumenal segment spans residues 212 to 233; the sequence is WALTPVSWRKITSTNNANKVTG. A helical membrane pass occupies residues 234-254; it reads IFLILCSIFIVITTLFTFLHL. The Cytoplasmic segment spans residues 255–353; sequence RYIYLGVTTN…WNNLIERLKW (99 aa).

The protein belongs to the DHHC palmitoyltransferase family. SWF1 subfamily.

It is found in the endoplasmic reticulum membrane. It catalyses the reaction L-cysteinyl-[protein] + hexadecanoyl-CoA = S-hexadecanoyl-L-cysteinyl-[protein] + CoA. In terms of biological role, palmitoyltransferase that targets several endosomal SNAREs. Palmitoylates the SNAREs at cysteine residues close to the cytoplasmic end of their transmembrane domain. May have a role in the cellular quality control of transmembrane domain-containing proteins. The chain is Palmitoyltransferase SWF1 (SWF1) from Candida albicans (strain SC5314 / ATCC MYA-2876) (Yeast).